The chain runs to 239 residues: Ribitol-5-phosphate cytidylyltransferase (239 aa).

Residues 7–10 (FAGG) and 80–86 (GETGQMS) each bind CTP.

The protein belongs to the IspD/TarI cytidylyltransferase family. TarI subfamily.

It catalyses the reaction D-ribitol 5-phosphate + CTP + H(+) = CDP-L-ribitol + diphosphate. Its pathway is cell wall biogenesis; poly(ribitol phosphate) teichoic acid biosynthesis. Catalyzes the transfer of the cytidylyl group of CTP to D-ribitol 5-phosphate. This chain is Ribitol-5-phosphate cytidylyltransferase, found in Streptococcus agalactiae serotype III (strain NEM316).